We begin with the raw amino-acid sequence, 234 residues long: Transmembrane protein 65 (234 aa).

The N-terminal 55 residues, Met-1–Glu-55, are a transit peptide targeting the mitochondrion. The Cytoplasmic portion of the chain corresponds to Pro-56–Tyr-110. The chain crosses the membrane as a helical span at residues Val-111–Ile-131. Over Val-132 to Glu-138 the chain is Extracellular. A helical transmembrane segment spans residues Leu-139–Val-159. The Cytoplasmic segment spans residues Ser-160–Lys-203. A helical transmembrane segment spans residues Ala-204–Ser-224. Topologically, residues Glu-225–Asn-234 are extracellular.

Monomer. Homodimer. Interacts with GJA1. Interacts weakly with DSP. Interacts with SCN1B. In terms of tissue distribution, predominantly expressed in the ventricular tissue (at protein level).

It is found in the cell membrane. Its subcellular location is the mitochondrion inner membrane. Essential for maintaining proper cardiac intercalated disk (ICD) structure and function as well as cardiac conduction velocity in the heart. Its association with SCN1B is required for stabilizing the perinexus in the ICD and for localization of GJA1 and SCN5A to the ICD. May regulate the function of the gap junction protein GJA1 and may contribute to the stability and proper localization of GJA1 to cardiac intercalated disk thereby regulating gap junction communication. Regulates mitochondrial respiration and mitochondrial DNA copy number maintenance. This Mus musculus (Mouse) protein is Transmembrane protein 65 (Tmem65).